The chain runs to 65 residues: Period circadian protein (65 aa).

The segment at 1–65 (EGSGGSGSSG…VTLTESLLNK (65 aa)) is disordered. Positions 18 to 28 (VRMSSVTNTSN) are enriched in polar residues. Over residues 29 to 38 (AGTGTSAGDN) the composition is skewed to low complexity. Residues 56 to 65 (VTLTESLLNK) are compositionally biased toward polar residues.

As to quaternary structure, forms a heterodimer with timeless (TIM); the complex then translocates into the nucleus. Phosphorylated with a circadian rhythmicity, probably by the double-time protein (dbt). Phosphorylation could be implicated in the stability of per monomer and in the formation of heterodimer per-tim.

It is found in the nucleus. The protein resides in the cytoplasm. It localises to the perinuclear region. In terms of biological role, essential for biological clock functions. Determines the period length of circadian and ultradian rhythms; an increase in PER dosage leads to shortened circadian rhythms and a decrease leads to lengthened circadian rhythms. Essential for the circadian rhythmicity of locomotor activity, eclosion behavior, and for the rhythmic component of the male courtship song that originates in the thoracic nervous system. The biological cycle depends on the rhythmic formation and nuclear localization of the TIM-PER complex. Light induces the degradation of TIM, which promotes elimination of PER. Nuclear activity of the heterodimer coordinatively regulates PER and TIM transcription through a negative feedback loop. Behaves as a negative element in circadian transcriptional loop. Does not appear to bind DNA, suggesting indirect transcriptional inhibition. This is Period circadian protein (per) from Drosophila mojavensis (Fruit fly).